A 649-amino-acid polypeptide reads, in one-letter code: Threonine--tRNA ligase (649 aa).

The TGS domain maps to 1–61 (MIKITFPDGA…TQDGSIEIVT (61 aa)). The catalytic stretch occupies residues 242 to 540 (DHRKLGKELD…LIETYKGAFP (299 aa)). Zn(2+) contacts are provided by C336, H387, and H517.

The protein belongs to the class-II aminoacyl-tRNA synthetase family. As to quaternary structure, homodimer. It depends on Zn(2+) as a cofactor.

The protein resides in the cytoplasm. The enzyme catalyses tRNA(Thr) + L-threonine + ATP = L-threonyl-tRNA(Thr) + AMP + diphosphate + H(+). Functionally, catalyzes the attachment of threonine to tRNA(Thr) in a two-step reaction: L-threonine is first activated by ATP to form Thr-AMP and then transferred to the acceptor end of tRNA(Thr). Also edits incorrectly charged L-seryl-tRNA(Thr). The protein is Threonine--tRNA ligase of Streptococcus mutans serotype c (strain ATCC 700610 / UA159).